The following is a 435-amino-acid chain: Enolase (435 aa).

Position 163 (Gln163) interacts with (2R)-2-phosphoglycerate. The Proton donor role is filled by Glu205. Mg(2+) contacts are provided by Asp243, Glu292, and Asp319. Residues Lys344, Arg373, Ser374, and Lys395 each coordinate (2R)-2-phosphoglycerate. Lys344 functions as the Proton acceptor in the catalytic mechanism.

Belongs to the enolase family. Mg(2+) serves as cofactor.

The protein resides in the cytoplasm. It is found in the secreted. It localises to the cell surface. It carries out the reaction (2R)-2-phosphoglycerate = phosphoenolpyruvate + H2O. It participates in carbohydrate degradation; glycolysis; pyruvate from D-glyceraldehyde 3-phosphate: step 4/5. Functionally, catalyzes the reversible conversion of 2-phosphoglycerate (2-PG) into phosphoenolpyruvate (PEP). It is essential for the degradation of carbohydrates via glycolysis. The chain is Enolase from Streptococcus pyogenes serotype M12 (strain MGAS2096).